Consider the following 883-residue polypeptide: NF-X1-type zinc finger protein NFXL2 (883 aa).

Residues 1–10 (MTNMAGTATT) show a composition bias toward polar residues. The interval 1–44 (MTNMAGTATTEFRWKSPPQPPSQEQPISDSDSDSGSDSENHQHR) is disordered. An RING-type; degenerate zinc finger spans residues 87 to 152 (CLICLERIKR…EAVWNCPKCR (66 aa)). NF-X1-type zinc fingers lie at residues 198 to 216 (CGHC…SCPK), 250 to 269 (CNIH…PCRE), 303 to 322 (CGKH…LCPY), 357 to 377 (CGYH…TCRI), 410 to 429 (CARH…PCSE), 437 to 456 (CRNH…PCPI), 494 to 515 (CRHG…PCRL), 523 to 568 (CGHK…RCPE), 605 to 636 (CGNH…KCDL), 646 to 664 (CQHP…PCKT), and 709 to 738 (CTHL…RCKC). Positions 798-824 (EIEEKEEPSGKNASKRRKRRGRGQDIQ) are disordered. The chain crosses the membrane as a helical span at residues 841-863 (MVVMLVAMLAAVSYYGYKGLLWL).

Belongs to the NFX1 family. In terms of assembly, interacts with ADO1/ZTL. Constitutively expressed in mesophyll and guard cells.

It localises to the nucleus. The protein localises to the membrane. The protein operates within protein modification; protein ubiquitination. Probable transcriptional regulator. May mediate E2- or E3-dependent ubiquitination. Required to gate light sensitivity during the night. Regulates the speed of the clock by acting in the feedback loop between CCA1, LHY and APRR1/TOC1. Promotes the expression of CCA1 at night but not by days. This activational effect is enhanced by interaction with ADO1/ZTL. Association with ADO1/ZTL is not leading to the degradation of NFXL2. Confers sensitivity to osmotic stress such as high salinity. Prevents H(2)O(2) production and abscisic acid accumulation. Part of a regulatory network that integrates the biosynthesis and action of abscisic acid, reactive oxygen species and cuticle components. The polypeptide is NF-X1-type zinc finger protein NFXL2 (NFXL2) (Arabidopsis thaliana (Mouse-ear cress)).